Reading from the N-terminus, the 343-residue chain is Ribosomal RNA-processing protein 8 (343 aa).

The disordered stretch occupies residues 1-123; the sequence is MGKKRKITDE…NDDVAAAPEE (123 aa). Positions 7-33 are enriched in basic and acidic residues; it reads ITDEKDAQHVPAEKREKVENWLKKSTE. Composition is skewed to basic residues over residues 45-59 and 89-101; these read KKKR…KLAA and KKKR…KKKF. Acidic residues predominate over residues 112–123; that stretch reads TENDDVAAAPEE. 6 residues coordinate S-adenosyl-L-methionine: His-169, Gly-204, Asp-224, Asp-236, Met-237, and Cys-253.

This sequence belongs to the methyltransferase superfamily. RRP8 family.

It is found in the nucleus. The protein localises to the nucleolus. Its function is as follows. Probable methyltransferase required to silence rDNA. Involved in regulation of antisense ribosomal siRNA production. Required for the N1-methyladenosine modification of 26S rRNAs. This is Ribosomal RNA-processing protein 8 (rrp-8) from Caenorhabditis elegans.